We begin with the raw amino-acid sequence, 7785 residues long: Probable non-canonical nonribosomal peptide synthetase (NRPS) CymA (7785 aa).

3 Carrier domains span residues 487 to 562 (TARS…QRQE), 1908 to 1983 (HART…SEQQ), and 2958 to 3033 (SPGM…LEGG). S522, S1943, and S2993 each carry O-(pantetheine 4'-phosphoryl)serine. The LRR 1 repeat unit spans residues 3088–3111 (RLALADVVVRHEALRTVFAERAGN). Carrier domains follow at residues 3978-4053 (APRT…SEQQ), 5002-5077 (EPRT…LEAN), and 6389-6464 (GPRD…AQGS). O-(pantetheine 4'-phosphoryl)serine is present on residues S4013, S5037, and S6424. The LRR 2 repeat unit spans residues 6853–6875 (TGVSRVDLSVNAIETFDDHGLPA). Residues 7432–7507 (GPRTPQEEIL…QLAEQLGSDG (76 aa)) form the Carrier 7 domain. Residue S7467 is modified to O-(pantetheine 4'-phosphoryl)serine.

Pantetheine 4'-phosphate is required as a cofactor.

Probable non-canonical nonribosomal peptide synthetase (NRPS); part of the gene cluster that mediates the biosynthesis of cyclic heptapeptides, known as cyclomarins and also of cyclic dipeptides, called cyclomarazines, which have both antimicrobial and cytotoxic effects. First, CymD catalyzes the reverse N-prenylation of monomeric L-tryptophan with dimethylallyl diphosphate (DMAPP) to form N-(1,1-dimethylallyl)-tryptophan (r-N-DMAT). The N-(1,1-dimethylallyl)-tryptophan produced by CymD is then combined with a range of standard and nonproteinogenic amino acid substrates to synthesize the peptides, a process that is probably catalyzed by the non-canonical nonribosomal peptide synthetase (NRPS), CymA. Other proteins in the cluster catalyze further modifications of the peptides including CymV which catalyzes the oxidation of olefinic cyclomarins and cyclomarazines to their respective epoxide derivatives. The protein is Probable non-canonical nonribosomal peptide synthetase (NRPS) CymA of Salinispora arenicola (strain CNS-205).